Consider the following 461-residue polypeptide: Cysteine--tRNA ligase (461 aa).

Position 30 (Cys30) interacts with Zn(2+). The short motif at 32 to 42 (PTVYSYAHIGN) is the 'HIGH' region element. Zn(2+)-binding residues include Cys212, His237, and Glu241. The 'KMSKS' region motif lies at 270–274 (KMSKS). Position 273 (Lys273) interacts with ATP.

It belongs to the class-I aminoacyl-tRNA synthetase family. As to quaternary structure, monomer. It depends on Zn(2+) as a cofactor.

The protein localises to the cytoplasm. It catalyses the reaction tRNA(Cys) + L-cysteine + ATP = L-cysteinyl-tRNA(Cys) + AMP + diphosphate. This chain is Cysteine--tRNA ligase, found in Maricaulis maris (strain MCS10) (Caulobacter maris).